The primary structure comprises 537 residues: CTP synthase (537 aa).

Residues 1-267 (MAKFVFVTGG…ADIVLDKLGI (267 aa)) form an amidoligase domain region. A CTP-binding site is contributed by serine 13. Serine 13 is a binding site for UTP. 14–19 (SLGKGI) lines the ATP pocket. Tyrosine 54 provides a ligand contact to L-glutamine. Aspartate 71 serves as a coordination point for ATP. The Mg(2+) site is built by aspartate 71 and glutamate 141. CTP is bound by residues 148–150 (DIE), 188–193 (KTKPTQ), and lysine 224. Residues 188 to 193 (KTKPTQ) and lysine 224 contribute to the UTP site. The Glutamine amidotransferase type-1 domain occupies 292 to 534 (TIALVGKYVS…IGAARKYKES (243 aa)). Residue glycine 354 participates in L-glutamine binding. The active-site Nucleophile; for glutamine hydrolysis is cysteine 381. L-glutamine is bound by residues 382 to 385 (LGMQ), glutamate 405, and arginine 462. Catalysis depends on residues histidine 507 and glutamate 509.

This sequence belongs to the CTP synthase family. As to quaternary structure, homotetramer.

The enzyme catalyses UTP + L-glutamine + ATP + H2O = CTP + L-glutamate + ADP + phosphate + 2 H(+). It catalyses the reaction L-glutamine + H2O = L-glutamate + NH4(+). The catalysed reaction is UTP + NH4(+) + ATP = CTP + ADP + phosphate + 2 H(+). The protein operates within pyrimidine metabolism; CTP biosynthesis via de novo pathway; CTP from UDP: step 2/2. Allosterically activated by GTP, when glutamine is the substrate; GTP has no effect on the reaction when ammonia is the substrate. The allosteric effector GTP functions by stabilizing the protein conformation that binds the tetrahedral intermediate(s) formed during glutamine hydrolysis. Inhibited by the product CTP, via allosteric rather than competitive inhibition. In terms of biological role, catalyzes the ATP-dependent amination of UTP to CTP with either L-glutamine or ammonia as the source of nitrogen. Regulates intracellular CTP levels through interactions with the four ribonucleotide triphosphates. The chain is CTP synthase from Pelotomaculum thermopropionicum (strain DSM 13744 / JCM 10971 / SI).